Reading from the N-terminus, the 1040-residue chain is MQVLPPSSTGGPSRLFIMRPVATTLLMVAILLAGIIGYRALPVSALPEVDYPTIQVVTLYPGASPDVMTSAVTAPLERQFGQMSGLKQMSSQSSGGASVITLQFQLTLPLDVAEQEVQAAINAATNLLPSDLPNPPVYSKVNPADPPIMTLAVTSTAMPMTQVEDMVETRVAQKISQISGVGLVTLSGGQRPAVRVKLNAQAIAALGLTSETVRTAITGANVNSAKGSLDGPSRAVTLSANDQMQSAEEYRQLIIAYQNSAPIRLGDVATVEQGAENSWLGAWANKEQAIVMNVQRQPGANIISTADSIRQMLPQLTESLPKSVKVTVLSDRTTNIRASVDDTQFELMMAIALVVMIIYLFLRNIPATIIPGVAVPLSLIGTFAVMVFLDFSINNLTLMALTIATGFVVDDAIVVIENISRYIEKGEKPLAAALKGAGEIGFTIISLTFSLIAVLIPLLFMGDIVGRLFREFAITLAVAILISAVVSLTLTPMMCARMLSQESLRKQNRFSRASEKMFDRIIAAYGRGLAKVLNHPWLTLSVALSTLLLSVLLWVFIPKGFFPVQDNGIIQGTLQAPQSSSFTNMAQRQRQVADVILQDPAVQSLTSFVGVDGTNPSLNSARLQINLKPLDERDDRVQKVIARLQTAVDKVPGVDLFLQPTQDLTIDTQVSRTQYQFTLQATSLDALSTWVPQLVEKLQQLPQLSDVSSDWQDKGLVAYVNVDRDSASRLGISMADVDNALYNAFGQRLISTIYTQANQYRVVLEHNTENTPGLAALDTIRLTSSDGGVVPLSSIAKIEQRFAPLSINHLDQFPVTTISFNVPDNYSLGDAVQAIMDTEKTLNLPVDITTQFQGSTLAFQSALGSTVWLIVAAVVAMYIVLGILYESFIHPITILSTLPTAGVGALLALMIAGSELDVIAIIGIILLIGIVKKNAIMMIDFALAAEREQGMSPRDAIYQACLLRFRPILMTTLAALLGALPLMLSTGVGAELRRPLGIGMVGGLIVSQVLTLFTTPVIYLLFDRLALWTKSRFARHEEEA.

A run of 12 helical transmembrane segments spans residues 16–36, 347–367, 369–389, 396–416, 440–460, 472–492, 537–557, 863–883, 888–908, 911–931, 968–988, and 998–1018; these read FIMR…AGII, LMMA…NIPA, IIPG…MVFL, LTLM…IVVI, IGFT…PLLF, FAIT…TLTP, WLTL…WVFI, LGST…VLGI, FIHP…ALLA, IAGS…IGIV, ILMT…STGV, and IGMV…TPVI.

It belongs to the resistance-nodulation-cell division (RND) (TC 2.A.6) family. MdtB subfamily. In terms of assembly, part of a tripartite efflux system composed of MdtA, MdtB and MdtC. MdtB forms a heteromultimer with MdtC.

Its subcellular location is the cell inner membrane. The MdtABC tripartite complex confers resistance against novobiocin and deoxycholate. This chain is Multidrug resistance protein MdtB, found in Escherichia coli O7:K1 (strain IAI39 / ExPEC).